Consider the following 471-residue polypeptide: Extracellular endo-alpha-(1-&gt;5)-L-arabinanase (471 aa).

The signal sequence occupies residues 1–19; sequence MRFLFLMITLTALTGYILA. The active-site Proton acceptor is D32. Substrate is bound by residues D32, G117, 167 to 170, 187 to 189, and 219 to 223; these read NALD, SWF, and HSSME. Catalysis depends on E223, which acts as the Proton donor. A Ca(2+)-binding site is contributed by H314.

The protein belongs to the glycosyl hydrolase 43 family. In terms of assembly, monomer. The cofactor is Ca(2+).

The protein resides in the secreted. The catalysed reaction is Endohydrolysis of (1-&gt;5)-alpha-arabinofuranosidic linkages in (1-&gt;5)-arabinans.. Its pathway is glycan metabolism; L-arabinan degradation. Functionally, involved in the degradation of arabinan and is a key enzyme in the complete degradation of the plant cell wall. Catalyzes the internal cleavage of alpha-(1-&gt;5)-L-arabinofuranosyl residues in different arabinan-containing polysaccharides, and releases arabinotriose and arabinobiose as end products. It acts on branched arabinan (from sugar beet), but more slowly when compared to linear or debranched arabinan. In Thermotoga petrophila (strain ATCC BAA-488 / DSM 13995 / JCM 10881 / RKU-1), this protein is Extracellular endo-alpha-(1-&gt;5)-L-arabinanase.